The primary structure comprises 159 residues: Vesicle transport protein SFT2A (159 aa).

Residues Met-1 to Trp-36 lie on the Cytoplasmic side of the membrane. Ser-9 bears the Phosphoserine mark. A helical membrane pass occupies residues Phe-37–Leu-57. At Pro-58–Lys-62 the chain is on the lumenal side. The chain crosses the membrane as a helical span at residues Leu-63–Met-83. Over Gly-84–Arg-97 the chain is Cytoplasmic. A helical transmembrane segment spans residues Leu-98–Trp-118. Over His-119–Gly-122 the chain is Lumenal. A helical transmembrane segment spans residues Leu-123–Ile-143. Residues Pro-144–Ser-159 lie on the Cytoplasmic side of the membrane.

This sequence belongs to the SFT2 family.

The protein localises to the membrane. Its function is as follows. May be involved in fusion of retrograde transport vesicles derived from an endocytic compartment with the Golgi complex. This Homo sapiens (Human) protein is Vesicle transport protein SFT2A.